The primary structure comprises 314 residues: Porphobilinogen deaminase (314 aa).

S-(dipyrrolylmethanemethyl)cysteine is present on cysteine 249.

Belongs to the HMBS family. In terms of assembly, monomer. It depends on dipyrromethane as a cofactor.

The enzyme catalyses 4 porphobilinogen + H2O = hydroxymethylbilane + 4 NH4(+). It functions in the pathway porphyrin-containing compound metabolism; protoporphyrin-IX biosynthesis; coproporphyrinogen-III from 5-aminolevulinate: step 2/4. Tetrapolymerization of the monopyrrole PBG into the hydroxymethylbilane pre-uroporphyrinogen in several discrete steps. The chain is Porphobilinogen deaminase from Brucella anthropi (strain ATCC 49188 / DSM 6882 / CCUG 24695 / JCM 21032 / LMG 3331 / NBRC 15819 / NCTC 12168 / Alc 37) (Ochrobactrum anthropi).